An 862-amino-acid polypeptide reads, in one-letter code: Leucine--tRNA ligase (862 aa).

Residues Pro-49–His-59 carry the 'HIGH' region motif. The short motif at Lys-625–Ser-629 is the 'KMSKS' region element. Position 628 (Lys-628) interacts with ATP.

It belongs to the class-I aminoacyl-tRNA synthetase family.

The protein resides in the cytoplasm. It catalyses the reaction tRNA(Leu) + L-leucine + ATP = L-leucyl-tRNA(Leu) + AMP + diphosphate. The sequence is that of Leucine--tRNA ligase from Paramagnetospirillum magneticum (strain ATCC 700264 / AMB-1) (Magnetospirillum magneticum).